The sequence spans 101 residues: PAT complex subunit Asterix (101 aa).

The interval 1–26 (MADPRRPARVTRYKPPTTESNPALED) is disordered. Over 1-27 (MADPRRPARVTRYKPPTTESNPALEDP) the chain is Cytoplasmic. The helical transmembrane segment at 28 to 46 (TPDYMNLLGMVFSMCGLML) threads the bilayer. K47 is a topological domain (lumenal). The chain crosses the membrane as a helical span at residues 48-65 (LKWCAWIAVYCSFISFAN). Topologically, residues 66–69 (SRSS) are cytoplasmic. A helical transmembrane segment spans residues 70 to 90 (EDTKQMMSSFMLSISAVVMSY). At 91-101 (LQNPQPMSPPW) the chain is on the lumenal side.

It belongs to the Asterix family. Component of the multi-pass translocon (MPT) complex.

It is found in the endoplasmic reticulum membrane. Component of the multi-pass translocon (MPT) complex that mediates insertion of multi-pass membrane proteins into the lipid bilayer of membranes. The MPT complex takes over after the SEC61 complex: following membrane insertion of the first few transmembrane segments of proteins by the SEC61 complex, the MPT complex occludes the lateral gate of the SEC61 complex to promote insertion of subsequent transmembrane regions. In Gallus gallus (Chicken), this protein is PAT complex subunit Asterix (WDR83OS).